Reading from the N-terminus, the 20-residue chain is Brevinin-1SPb (20 aa).

A disulfide bridge connects residues cysteine 14 and cysteine 20.

As to expression, expressed by the skin glands.

The protein localises to the secreted. Its function is as follows. Antimicrobial peptide with activity against Gram-negative and Gram-positive bacteria (MIC=50 uM against E.coli, MIC=6 uM against S.aureus) and fungi (MIC=13 uM against C.albicans). Shows hemolytic activity on human erythrocytes (HC(50)=25 uM). This is Brevinin-1SPb from Lithobates septentrionalis (Mink frog).